The sequence spans 2162 residues: Polyketide synthase 1 (2162 aa).

The N-terminal acylcarrier protein transacylase domain (SAT) stretch occupies residues 19-264 (FVFGDQTSCN…TPLAVHAPYH (246 aa)). The Ketosynthase family 3 (KS3) domain maps to 397–841 (DSKIAIIGMS…GGNTALLVED (445 aa)). Catalysis depends on for beta-ketoacyl synthase activity residues Cys-578, His-713, and His-757. The interval 941 to 1245 (AFVFSGQGSQ…PSLMRSHDGW (305 aa)) is malonyl-CoA:ACP transacylase (MAT) domain. The For acyl/malonyl transferase activity role is filled by Ser-1030. The segment at 1322-1636 (TASVHRIVRE…RRVLDAAMPA (315 aa)) is product template (PT) domain. Residues 1326–1459 (HRIVRESVDR…SSLCFGESRA (134 aa)) form an N-terminal hotdog fold region. Positions 1326-1631 (HRIVRESVDR…FQGVPRRVLD (306 aa)) constitute a PKS/mFAS DH domain. His-1358 serves as the catalytic Proton acceptor; for dehydratase activity. The tract at residues 1486 to 1631 (LNSRLSSGVI…FQGVPRRVLD (146 aa)) is C-terminal hotdog fold. Asp-1545 acts as the Proton donor; for dehydratase activity in catalysis. Residues 1633-1669 (AMPAPKSPNKTRDHASPNATISRAKPPQGSSPASSAQ) are disordered. Low complexity predominate over residues 1658–1669 (PPQGSSPASSAQ). Residues 1692-1766 (IDPMHAVLRI…DFAVHLGLDT (75 aa)) enclose the Carrier 1 domain. Residue Ser-1726 is modified to O-(pantetheine 4'-phosphoryl)serine. Over residues 1772–1783 (SSGESNVSGGVS) the composition is skewed to low complexity. The disordered stretch occupies residues 1772–1809 (SSGESNVSGGVSPRSDSVAAMSSDVTTPPAQSPLGSMS). Polar residues predominate over residues 1794 to 1809 (SDVTTPPAQSPLGSMS). Residues 1807 to 1884 (SMSSSPCEDL…SFKHVFEQEI (78 aa)) form the Carrier 2 domain. O-(pantetheine 4'-phosphoryl)serine is present on Ser-1844. Positions 1896–2160 (LKKYHATSTL…ERVAAFIRSA (265 aa)) are thioesterase (TE) domain. Ser-1987 functions as the For thioesterase activity in the catalytic mechanism.

Polyketide synthase; part of the Pks1 gene cluster that mediates the biosynthesis of an anthraquinone derivative pigment that contributes to conidial pigmentation that provides protection from UV radiation, heat and cold stress. The polyketide synthase Pks1 produces 1-acetyl-2,4,6,8-tetrahydroxy-9,10-anthraquinone though condensation of acetyl-CoA with malonyl-CoA. The dehydratase EthD and the laccase Mlac1 further convert the anthraquinone derivative into the final conidial pigment. The sequence is that of Polyketide synthase 1 from Metarhizium album (strain ARSEF 1941).